A 472-amino-acid chain; its full sequence is Putative ankyrin repeat protein L675 (472 aa).

8 ANK repeats span residues 125 to 156, 187 to 216, 265 to 295, 297 to 323, 325 to 351, 352 to 381, 382 to 411, and 413 to 440; these read YKANRFYLGEKFDLGDVEVVKFFIKKGTDIHL, DNFKVLAKICRDGNLELLRLLELNGFNETI, YKTKVLLMAIANNHAELVQYLLTQNPSDKDI, HAMLYAVTTANASLLDYTLKNGGNIHY, NDQALILAVRFNHISMVRKLICLGMDS, NNVFALTMAAENNHQDIVQHLINRGADVNA, NNRSALIAAVKNGHLKIVQMFVNNGADIKI, and DTVIKTACKNGHNNIVKYLLGKGVSCDD.

In Acanthamoeba polyphaga (Amoeba), this protein is Putative ankyrin repeat protein L675.